Consider the following 119-residue polypeptide: ATP-dependent Clp protease adapter protein ClpS (119 aa).

Residues 1–24 (MGPESPDSIPPHGPGNGDGDQDLD) form a disordered region.

The protein belongs to the ClpS family. Binds to the N-terminal domain of the chaperone ClpA.

Its function is as follows. Involved in the modulation of the specificity of the ClpAP-mediated ATP-dependent protein degradation. The polypeptide is ATP-dependent Clp protease adapter protein ClpS (Gluconobacter oxydans (strain 621H) (Gluconobacter suboxydans)).